The sequence spans 312 residues: Transcription initiation factor IIB 1 (312 aa).

The TFIIB-type zinc finger occupies 12–43 (EIERCPECGSTNLIRDYEHGELVCGECGAVIE). Residues cysteine 16, cysteine 19, cysteine 35, and cysteine 38 each contribute to the Zn(2+) site. A run of 2 repeats spans residues 129-212 (QELE…SRYL) and 223-304 (DYIS…ELTE).

It belongs to the TFIIB family.

Its function is as follows. Stabilizes TBP binding to an archaeal box-A promoter. Also responsible for recruiting RNA polymerase II to the pre-initiation complex (DNA-TBP-TFIIB). This is Transcription initiation factor IIB 1 from Thermoplasma volcanium (strain ATCC 51530 / DSM 4299 / JCM 9571 / NBRC 15438 / GSS1).